A 406-amino-acid polypeptide reads, in one-letter code: Glycosyltransferase GlyE (406 aa).

The GT8 domain stretch occupies residues 3-265 (NTKRAVVFAG…SVILNEWFSK (263 aa)). UDP-binding positions include 11 to 16 (AGDYAY) and 106 to 107 (DS). 3 residues coordinate Mn(2+): aspartate 106, aspartate 108, and histidine 227. Position 227 to 233 (227 to 233 (HYISQDK)) interacts with UDP.

The protein in the N-terminal section; belongs to the glycosyltransferase 8 family. The cofactor is Mn(2+).

It functions in the pathway protein modification; protein glycosylation. Its function is as follows. Involved in the polymorphic O-glycosylation of the serine-rich repeat protein PsrP. Catalyzes the third step in glycosylation of PsrP in this bacteria. Transfers galactose from UDP-galactose to the terminal glucose moiety of already-glycosylated PsrP (using the short substrate PsrP-GlcNAc-Glc). Has a very marked preference for PsrP substrate that has already been modified by GlcNAc and glucose. Has hydrolytic activity against UDP-galactose but none against UDP-glucose. Also catalyzes the fourth step in glycosylation of PsrP in this bacteria. Can transfer the sugar from UDP-galactose to the terminal sugar moiety of PsrP-GlcNAc-Glc-Glc and of PsrP-GlcNAc-Glc-Gal. The protein is Glycosyltransferase GlyE of Streptococcus pneumoniae serotype 4 (strain ATCC BAA-334 / TIGR4).